The following is a 297-amino-acid chain: Probable endonuclease 4 (297 aa).

9 residues coordinate Zn(2+): histidine 69, histidine 110, glutamate 145, aspartate 179, histidine 182, histidine 214, aspartate 227, histidine 229, and glutamate 259.

The protein belongs to the AP endonuclease 2 family. Zn(2+) serves as cofactor.

It carries out the reaction Endonucleolytic cleavage to 5'-phosphooligonucleotide end-products.. In terms of biological role, endonuclease IV plays a role in DNA repair. It cleaves phosphodiester bonds at apurinic or apyrimidinic (AP) sites, generating a 3'-hydroxyl group and a 5'-terminal sugar phosphate. The polypeptide is Probable endonuclease 4 (Oceanobacillus iheyensis (strain DSM 14371 / CIP 107618 / JCM 11309 / KCTC 3954 / HTE831)).